The chain runs to 451 residues: Endosomal transmembrane epsin interactor 1 (451 aa).

Residues methionine 1 to glycine 29 form the signal peptide. Over alanine 30 to lysine 85 the chain is Lumenal. Residues valine 86 to alanine 106 traverse the membrane as a helical segment. The Cytoplasmic portion of the chain corresponds to leucine 107 to leucine 451. The interval leucine 107 to leucine 451 is mediates interaction with EPN1. Short sequence motifs (PPxY; mediates interaction with ITCH) lie at residues proline 148–tyrosine 151 and proline 194–tyrosine 197. Residues threonine 204–glutamine 213 show a composition bias toward polar residues. The disordered stretch occupies residues threonine 204–proline 224. Residue lysine 274 forms a Glycyl lysine isopeptide (Lys-Gly) (interchain with G-Cter in ubiquitin) linkage. Serine 275 carries the post-translational modification Phosphoserine. Residue lysine 365 forms a Glycyl lysine isopeptide (Lys-Gly) (interchain with G-Cter in ubiquitin) linkage.

Belongs to the ENTREP family. In terms of assembly, interacts with ITCH; enhances the ubiquitination of CXCR4 by ITCH and the subsequent endocytosis and desensitization of the receptor. Interacts with EPN1.

It is found in the early endosome membrane. It localises to the late endosome membrane. Its subcellular location is the recycling endosome membrane. The protein localises to the cell membrane. Its function is as follows. Functions as an activator of the E3 ubiquitin protein ligase ITCH in the ubiquitination of the CXCL12-activated CXCR4 receptor. Thereby, triggers CXCR4 endocytosis and desensitization, negatively regulating the CXCL12/CXCR4 signaling pathway. The chain is Endosomal transmembrane epsin interactor 1 from Mus musculus (Mouse).